Consider the following 76-residue polypeptide: Putative membrane protein insertion efficiency factor (76 aa).

It belongs to the UPF0161 family.

It localises to the cell inner membrane. Functionally, could be involved in insertion of integral membrane proteins into the membrane. The protein is Putative membrane protein insertion efficiency factor of Paraburkholderia phytofirmans (strain DSM 17436 / LMG 22146 / PsJN) (Burkholderia phytofirmans).